The following is a 156-amino-acid chain: Endoribonuclease YbeY (156 aa).

Positions 117, 121, and 127 each coordinate Zn(2+).

This sequence belongs to the endoribonuclease YbeY family. Zn(2+) serves as cofactor.

It localises to the cytoplasm. Single strand-specific metallo-endoribonuclease involved in late-stage 70S ribosome quality control and in maturation of the 3' terminus of the 16S rRNA. This is Endoribonuclease YbeY from Shewanella frigidimarina (strain NCIMB 400).